We begin with the raw amino-acid sequence, 348 residues long: Chloroacetanilide N-alkylformylase, oxygenase component (348 aa).

Positions 7-108 (WYAVAWCDEV…ARERHKLIWA (102 aa)) constitute a Rieske domain. [2Fe-2S] cluster contacts are provided by Cys-47, His-49, Cys-66, and His-69. Positions 159 and 164 each coordinate Fe cation. His-250 serves as a coordination point for substrate. Fe cation is bound at residue Asp-293.

As to quaternary structure, the chloroacetanilide N-alkylformylase multicomponent enzyme system is composed of an oxygenase component (CndA) and an electron transfer component formed by a ferredoxin reductase (CndC1) and a ferredoxin (CndB1). In vitro, chloroacetanilide N-alkylformylase assays in which CndB1 is substituted for CndB2 demonstrate that the two enzymes possess nearly identical activities. The cofactor is [2Fe-2S] cluster.

The catalysed reaction is butachlor + 2 reduced [2Fe-2S]-[ferredoxin] + O2 + 2 H(+) = butyl formate + N-(2,6-diethylphenyl)-2-chloroacetamide + 2 oxidized [2Fe-2S]-[ferredoxin] + H2O. It carries out the reaction alachlor + 2 reduced [2Fe-2S]-[ferredoxin] + O2 + 2 H(+) = methyl formate + N-(2,6-diethylphenyl)-2-chloroacetamide + 2 oxidized [2Fe-2S]-[ferredoxin] + H2O. It catalyses the reaction acetochlor + 2 reduced [2Fe-2S]-[ferredoxin] + O2 + 2 H(+) = N-(2-ethyl-6-methylphenyl)-2-chloroacetamide + ethyl formate + 2 oxidized [2Fe-2S]-[ferredoxin] + H2O. With respect to regulation, activity enhanced by Fe(2+) and Mg(2+) ions. Divalent cations such as Ca(2+), Cr(2+), Co(2+), and Mn(2+) show moderate inhibition of the enzyme, whereas heavy metal ions such as Ag(+), Cu(2+), Pb(2+), Hg(2+), Ni(2+) and Zn(2+) severely inhibit the activity. Component of the chloroacetanilide N-alkylformylase multicomponent enzyme system involved in the degradation of chloroacetanilide herbicides (N-alkoxyalkyl-N-chloroacetyl-substituted aniline derivatives). In vitro, catalyzes the N-dealkylation of butachlor, alachlor and acetochlor to yield 2-chloro-N-(2,6-diethylphenyl)acetamide (CDEPA) (for alachlor and butachlor) and 2-chloro-N-(2-methyl-6-ethylphenyl)acetamide (CMEPA) (for acetochlor). The polypeptide is Chloroacetanilide N-alkylformylase, oxygenase component (Rhizorhabdus wittichii (strain DC-6 / KACC 16600) (Sphingomonas wittichii)).